A 57-amino-acid polypeptide reads, in one-letter code: uncharacterized protein (57 aa).

Residues M1–N22 form the signal peptide. Residues N26–Q57 adopt a coiled-coil conformation.

This is an uncharacterized protein from Acheta domesticus (House cricket).